Reading from the N-terminus, the 276-residue chain is Secretagogin (276 aa).

EF-hand domains follow at residues 12–47 (LDAA…MLMK), 58–93 (NLHK…EDEN), 105–140 (DSSV…LFLH), 149–184 (KLEE…QENF), 197–232 (ERKR…MMEL), and 240–276 (VDLD…KINP). Residues Asp25, Asp27, Tyr31, Glu36, Asp71, Ser73, Asp75, Arg77, Glu82, Asp118, Asp120, Ser122, Glu129, Asp162, Asn164, Asp166, Arg168, Asp173, Asp210, Ser212, Thr214, Glu221, Asp254, Asn256, Asp258, Lys260, and Glu265 each contribute to the Ca(2+) site.

In terms of tissue distribution, expressed at high levels in the pancreatic islets of Langerhans and to a much lesser extent in the gastrointestinal tract (stomach, small intestine and colon), the adrenal medulla and cortex and the thyroid C-cells. In the brain, the expression is restricted to distinct subtypes of neurons with highest expression in the molecular layer of the cerebellum (stellate and basket cells), in the anterior part of the pituitary gland, in the thalamus, in the hypothalamus and in a subgroup of neocortical neurons.

Its subcellular location is the cytoplasm. It is found in the secreted. The protein localises to the cytoplasmic vesicle. The protein resides in the secretory vesicle membrane. The chain is Secretagogin (SCGN) from Homo sapiens (Human).